A 231-amino-acid chain; its full sequence is Small ribosomal subunit protein uS2 (231 aa).

The tract at residues 1–23 (MKVTNLSEKEERGGELTEAEKEE) is disordered. Residues 7–23 (SEKEERGGELTEAEKEE) show a composition bias toward basic and acidic residues.

Belongs to the universal ribosomal protein uS2 family.

The polypeptide is Small ribosomal subunit protein uS2 (rps2) (Saccharolobus solfataricus (strain ATCC 35092 / DSM 1617 / JCM 11322 / P2) (Sulfolobus solfataricus)).